Reading from the N-terminus, the 427-residue chain is UDP-N-acetyl-D-mannosamine dehydrogenase (427 aa).

The NAD(+) site is built by Y19, I20, D39, R44, T91, and T130. 8 residues coordinate UDP-N-acetyl-alpha-D-mannosaminouronate: R155, V156, K207, N211, R214, H245, R247, and G258. The active-site Proton donor/acceptor is K207. Catalysis depends on C261, which acts as the Nucleophile. Residues Y318 and K319 each coordinate UDP-N-acetyl-alpha-D-mannosaminouronate. Position 326 (R326) interacts with NAD(+). K404 contributes to the UDP-N-acetyl-alpha-D-mannosaminouronate binding site.

Belongs to the UDP-glucose/GDP-mannose dehydrogenase family. In terms of assembly, homotetramer; probably dimer of dimers.

It carries out the reaction UDP-N-acetyl-alpha-D-mannosamine + 2 NAD(+) + H2O = UDP-N-acetyl-alpha-D-mannosaminouronate + 2 NADH + 3 H(+). In terms of biological role, catalyzes the four-electron oxidation of UDP-N-acetyl-D-mannosamine (UDP-ManNAc), reducing NAD(+) and releasing UDP-N-acetylmannosaminuronic acid (UDP-ManNAcA). Cannot use NADP instead of NAD. The polypeptide is UDP-N-acetyl-D-mannosamine dehydrogenase (wecC) (Methanococcus maripaludis (strain DSM 14266 / JCM 13030 / NBRC 101832 / S2 / LL)).